Here is a 248-residue protein sequence, read N- to C-terminus: 4-hydroxy-tetrahydrodipicolinate reductase (248 aa).

NAD(+)-binding positions include Asp-32, Gly-74–Thr-76, and Ser-99–Phe-102. The Proton donor/acceptor role is filled by His-134. His-135 lines the (S)-2,3,4,5-tetrahydrodipicolinate pocket. Lys-138 functions as the Proton donor in the catalytic mechanism. Gly-144–Thr-145 provides a ligand contact to (S)-2,3,4,5-tetrahydrodipicolinate.

It belongs to the DapB family.

The protein localises to the cytoplasm. It catalyses the reaction (S)-2,3,4,5-tetrahydrodipicolinate + NAD(+) + H2O = (2S,4S)-4-hydroxy-2,3,4,5-tetrahydrodipicolinate + NADH + H(+). The enzyme catalyses (S)-2,3,4,5-tetrahydrodipicolinate + NADP(+) + H2O = (2S,4S)-4-hydroxy-2,3,4,5-tetrahydrodipicolinate + NADPH + H(+). It functions in the pathway amino-acid biosynthesis; L-lysine biosynthesis via DAP pathway; (S)-tetrahydrodipicolinate from L-aspartate: step 4/4. In terms of biological role, catalyzes the conversion of 4-hydroxy-tetrahydrodipicolinate (HTPA) to tetrahydrodipicolinate. The chain is 4-hydroxy-tetrahydrodipicolinate reductase from Pelodictyon phaeoclathratiforme (strain DSM 5477 / BU-1).